A 179-amino-acid polypeptide reads, in one-letter code: Probable chemoreceptor glutamine deamidase CheD 2 (179 aa).

It belongs to the CheD family.

It carries out the reaction L-glutaminyl-[protein] + H2O = L-glutamyl-[protein] + NH4(+). Probably deamidates glutamine residues to glutamate on methyl-accepting chemotaxis receptors (MCPs), playing an important role in chemotaxis. In Ruegeria sp. (strain TM1040) (Silicibacter sp.), this protein is Probable chemoreceptor glutamine deamidase CheD 2.